A 336-amino-acid polypeptide reads, in one-letter code: D-erythrose-4-phosphate dehydrogenase (336 aa).

NAD(+) is bound at residue Arg-11 to Ile-12. Residues Ser-153 to Thr-155, Arg-199, Thr-212 to Arg-213, and Arg-235 contribute to the substrate site. Cys-154 (nucleophile) is an active-site residue. Asn-317 is a binding site for NAD(+).

This sequence belongs to the glyceraldehyde-3-phosphate dehydrogenase family. Epd subfamily. Homotetramer.

The protein localises to the cytoplasm. The catalysed reaction is D-erythrose 4-phosphate + NAD(+) + H2O = 4-phospho-D-erythronate + NADH + 2 H(+). The protein operates within cofactor biosynthesis; pyridoxine 5'-phosphate biosynthesis; pyridoxine 5'-phosphate from D-erythrose 4-phosphate: step 1/5. Functionally, catalyzes the NAD-dependent conversion of D-erythrose 4-phosphate to 4-phosphoerythronate. The protein is D-erythrose-4-phosphate dehydrogenase of Alteromonas mediterranea (strain DSM 17117 / CIP 110805 / LMG 28347 / Deep ecotype).